Consider the following 232-residue polypeptide: Golgi SNAP receptor complex member 1 (232 aa).

At Met-1–Asp-211 the chain is on the cytoplasmic side. Coiled coils occupy residues Tyr-6 to Lys-23 and Gly-52 to Leu-80. Residues Ser-212–Asn-232 traverse the membrane as a helical; Anchor for type IV membrane protein segment.

The protein belongs to the GOSR1 family. In terms of assembly, component of several multiprotein Golgi SNARE complexes.

It localises to the golgi apparatus membrane. Functionally, involved in transport from the ER to the Golgi apparatus as well as in intra-Golgi transport. It belongs to a super-family of proteins called t-SNAREs or soluble NSF (N-ethylmaleimide-sensitive factor) attachment protein receptor. The protein is Golgi SNAP receptor complex member 1 (Gos28) of Drosophila melanogaster (Fruit fly).